We begin with the raw amino-acid sequence, 100 residues long: Urease subunit gamma (100 aa).

This sequence belongs to the urease gamma subunit family. In terms of assembly, heterotrimer of UreA (gamma), UreB (beta) and UreC (alpha) subunits. Three heterotrimers associate to form the active enzyme.

The protein localises to the cytoplasm. The catalysed reaction is urea + 2 H2O + H(+) = hydrogencarbonate + 2 NH4(+). It participates in nitrogen metabolism; urea degradation; CO(2) and NH(3) from urea (urease route): step 1/1. The protein is Urease subunit gamma of Polynucleobacter asymbioticus (strain DSM 18221 / CIP 109841 / QLW-P1DMWA-1) (Polynucleobacter necessarius subsp. asymbioticus).